Consider the following 429-residue polypeptide: Adenylosuccinate synthetase (429 aa).

GTP-binding positions include 12–18 and 40–42; these read GDEGKGK and GHT. The Proton acceptor role is filled by D13. Mg(2+) contacts are provided by D13 and G40. Residues 13-16, 38-41, T130, R144, Q225, T240, and R304 contribute to the IMP site; these read DEGK and NAGH. The active-site Proton donor is the H41. 300–306 provides a ligand contact to substrate; sequence ATTGRPR. GTP contacts are provided by residues R306, 332-334, and 414-416; these read KLD and SVG.

This sequence belongs to the adenylosuccinate synthetase family. As to quaternary structure, homodimer. Mg(2+) is required as a cofactor.

The protein resides in the cytoplasm. The catalysed reaction is IMP + L-aspartate + GTP = N(6)-(1,2-dicarboxyethyl)-AMP + GDP + phosphate + 2 H(+). Its pathway is purine metabolism; AMP biosynthesis via de novo pathway; AMP from IMP: step 1/2. Plays an important role in the de novo pathway of purine nucleotide biosynthesis. Catalyzes the first committed step in the biosynthesis of AMP from IMP. This Syntrophobacter fumaroxidans (strain DSM 10017 / MPOB) protein is Adenylosuccinate synthetase.